Here is a 322-residue protein sequence, read N- to C-terminus: AB hydrolase superfamily protein FGSG_00044 (322 aa).

The AB hydrolase-1 domain maps to 36–319; sequence RTTPKQPVAI…ITAEVRRIVK (284 aa).

This sequence belongs to the AB hydrolase superfamily.

It functions in the pathway mycotoxin biosynthesis. AB hydrolase superfamily protein; part of the gene cluster that mediates the biosynthesis of gramillins A and B, bicyclic lipopeptides that induce cell death in maize leaves but not in wheat leaves. The nonribosomal peptide synthetase GRA1 incorporates respectively a glutamic adic (Glu), a leucine (Leu), a serine (Ser), a hydroxyglutamine (HOGln), a 2-amino decanoic acid, and 2 cysteins (CysB and CysA). The biosynthesis of 2-amino decanoic acid incorporated in gramillins could be initiated by a fatty acid synthase composed of the alpha and beta subunits FGSG_00036 and FGSG_11656. The cytochrome P450 monooxygenase FGSG_15680 could hydroxylate the fatty acid chain. Subsequent oxidation to the ketone by the oxidoreductase FGSG_00048 and transamination by aminotransferase FGSG_00049 could form 2-amino-decanoic acid. On the other hand, FGSG_15680 could also be responsible for the HO-modified glutamine at the gamma-position. Whether hydroxylation occurs on the fully assembled product or on the Gln residue prior to assembly into the gramillins requires further proof. The thioredoxin FGSG_00043 could also be required for the disulfide-bond formation between CysA and CysB. The specific involvement of the remaining proteins from the cluster is more difficult to discern, but could have broader regulatory (FGSG_00040 and FGSG_11657) or enzymatic functions (FGSG_00044 and FGSG_00045). The final C-domain of GRA1 does not possess the expected sequence of a termination CT domain, often implicated in macrocyclization and release of a cyclopeptidein fungal NRPs; and the thioesterase FGSG_00047 may act in concert with the terminal C-domain of GRA1 to catalyze the formation of the macrocyclic anhydride and release of the products. The chain is AB hydrolase superfamily protein FGSG_00044 from Gibberella zeae (strain ATCC MYA-4620 / CBS 123657 / FGSC 9075 / NRRL 31084 / PH-1) (Wheat head blight fungus).